The following is a 321-amino-acid chain: Putative membrane-bound redox modulator Alx (321 aa).

The Periplasmic portion of the chain corresponds to 1–6; that stretch reads MNTVGT. The helical transmembrane segment at 7–27 threads the bilayer; it reads PLLWGGFAVVVAIMLAIDLLL. Topologically, residues 28–43 are cytoplasmic; the sequence is QGRRGAHAMTMKQAAA. A helical transmembrane segment spans residues 44 to 64; that stretch reads WSLVWVTLSLLFNAAFWWYLV. Over 65 to 89 the chain is Periplasmic; that stretch reads QTEGRAVADPQALAFLTGYLIEKSL. The helical transmembrane segment at 90–110 threads the bilayer; sequence AVDNVFVWLMLFSYFSVPAAL. Residues 111–113 lie on the Cytoplasmic side of the membrane; that stretch reads QRR. A helical transmembrane segment spans residues 114-134; sequence VLVYGVLGAIVLRTIMIFTGS. W135 is a topological domain (periplasmic). A helical transmembrane segment spans residues 136–156; sequence LISQFDWILYIFGAFLLFTGV. Topologically, residues 157-198 are cytoplasmic; the sequence is KMALAHEDESGIGDKPLVRWLRGHLRMTDTIDNEHFFVRKNG. Residues 199–219 traverse the membrane as a helical segment; that stretch reads LLYATPLMLVLILVELSDVIF. Over 220 to 225 the chain is Periplasmic; it reads AVDSIP. Residues 226–246 form a helical membrane-spanning segment; that stretch reads AIFAVTTDPFIVLTSNLFAIL. Topologically, residues 247-261 are cytoplasmic; that stretch reads GLRAMYFLLAGVAER. Residues 262–282 traverse the membrane as a helical segment; the sequence is FSMLKYGLAVILVFIGIKMLI. The Periplasmic portion of the chain corresponds to 283-286; that stretch reads VDFY. A helical transmembrane segment spans residues 287–307; it reads HIPIAVSLGVVFGILVMTFII. The Cytoplasmic portion of the chain corresponds to 308–321; the sequence is NAWVNYRHDKQRVG.

It belongs to the TerC family.

It localises to the cell inner membrane. Its function is as follows. Has been proposed to be a redox modulator. The protein is Putative membrane-bound redox modulator Alx (alx) of Escherichia coli O157:H7.